A 148-amino-acid chain; its full sequence is Lysozyme C (148 aa).

A signal peptide spans methionine 1–glycine 18. The C-type lysozyme domain maps to lysine 19 to valine 148. 4 disulfides stabilise this stretch: cysteine 24/cysteine 146, cysteine 48/cysteine 134, cysteine 83/cysteine 99, and cysteine 95/cysteine 113. Catalysis depends on residues glutamate 53 and aspartate 71.

This sequence belongs to the glycosyl hydrolase 22 family. As to quaternary structure, monomer.

It catalyses the reaction Hydrolysis of (1-&gt;4)-beta-linkages between N-acetylmuramic acid and N-acetyl-D-glucosamine residues in a peptidoglycan and between N-acetyl-D-glucosamine residues in chitodextrins.. In terms of biological role, lysozymes have primarily a bacteriolytic function; those in tissues and body fluids are associated with the monocyte-macrophage system and enhance the activity of immunoagents. The sequence is that of Lysozyme C (LYZ) from Halichoerus grypus (Gray seal).